The chain runs to 238 residues: Ribonuclease PH (238 aa).

Residues Arg-86 and 124–126 (GTR) each bind phosphate.

It belongs to the RNase PH family. In terms of assembly, homohexameric ring arranged as a trimer of dimers.

It catalyses the reaction tRNA(n+1) + phosphate = tRNA(n) + a ribonucleoside 5'-diphosphate. Phosphorolytic 3'-5' exoribonuclease that plays an important role in tRNA 3'-end maturation. Removes nucleotide residues following the 3'-CCA terminus of tRNAs; can also add nucleotides to the ends of RNA molecules by using nucleoside diphosphates as substrates, but this may not be physiologically important. Probably plays a role in initiation of 16S rRNA degradation (leading to ribosome degradation) during starvation. The protein is Ribonuclease PH of Vibrio parahaemolyticus serotype O3:K6 (strain RIMD 2210633).